A 280-amino-acid polypeptide reads, in one-letter code: Ribosomal RNA small subunit methyltransferase A (280 aa).

S-adenosyl-L-methionine is bound by residues Asn-28, Leu-30, Gly-55, Glu-77, Asp-103, and Asn-122.

It belongs to the class I-like SAM-binding methyltransferase superfamily. rRNA adenine N(6)-methyltransferase family. RsmA subfamily.

It is found in the cytoplasm. It catalyses the reaction adenosine(1518)/adenosine(1519) in 16S rRNA + 4 S-adenosyl-L-methionine = N(6)-dimethyladenosine(1518)/N(6)-dimethyladenosine(1519) in 16S rRNA + 4 S-adenosyl-L-homocysteine + 4 H(+). Functionally, specifically dimethylates two adjacent adenosines (A1518 and A1519) in the loop of a conserved hairpin near the 3'-end of 16S rRNA in the 30S particle. May play a critical role in biogenesis of 30S subunits. This chain is Ribosomal RNA small subunit methyltransferase A, found in Dinoroseobacter shibae (strain DSM 16493 / NCIMB 14021 / DFL 12).